We begin with the raw amino-acid sequence, 549 residues long: Glucose-6-phosphate isomerase (549 aa).

Catalysis depends on Glu-355, which acts as the Proton donor. Catalysis depends on residues His-387 and Lys-515.

The protein belongs to the GPI family.

The protein resides in the cytoplasm. It carries out the reaction alpha-D-glucose 6-phosphate = beta-D-fructose 6-phosphate. It functions in the pathway carbohydrate biosynthesis; gluconeogenesis. The protein operates within carbohydrate degradation; glycolysis; D-glyceraldehyde 3-phosphate and glycerone phosphate from D-glucose: step 2/4. Catalyzes the reversible isomerization of glucose-6-phosphate to fructose-6-phosphate. The sequence is that of Glucose-6-phosphate isomerase from Histophilus somni (strain 129Pt) (Haemophilus somnus).